Here is a 145-residue protein sequence, read N- to C-terminus: ATP synthase epsilon chain (145 aa).

Residues 93–104 show a composition bias toward basic and acidic residues; that stretch reads AEAEKARARAQE. Positions 93–113 are disordered; the sequence is AEAEKARARAQEALKNPDASK.

This sequence belongs to the ATPase epsilon chain family. F-type ATPases have 2 components, CF(1) - the catalytic core - and CF(0) - the membrane proton channel. CF(1) has five subunits: alpha(3), beta(3), gamma(1), delta(1), epsilon(1). CF(0) has three main subunits: a, b and c.

Its subcellular location is the cell inner membrane. Produces ATP from ADP in the presence of a proton gradient across the membrane. In Francisella philomiragia subsp. philomiragia (strain ATCC 25017 / CCUG 19701 / FSC 153 / O#319-036), this protein is ATP synthase epsilon chain.